A 278-amino-acid polypeptide reads, in one-letter code: Tryptophan synthase alpha chain (278 aa).

Catalysis depends on proton acceptor residues Glu-49 and Asp-60.

It belongs to the TrpA family. In terms of assembly, tetramer of two alpha and two beta chains.

The catalysed reaction is (1S,2R)-1-C-(indol-3-yl)glycerol 3-phosphate + L-serine = D-glyceraldehyde 3-phosphate + L-tryptophan + H2O. It functions in the pathway amino-acid biosynthesis; L-tryptophan biosynthesis; L-tryptophan from chorismate: step 5/5. In terms of biological role, the alpha subunit is responsible for the aldol cleavage of indoleglycerol phosphate to indole and glyceraldehyde 3-phosphate. In Psychrobacter arcticus (strain DSM 17307 / VKM B-2377 / 273-4), this protein is Tryptophan synthase alpha chain.